We begin with the raw amino-acid sequence, 687 residues long: Fimbrin-5 (687 aa).

Positions 7 to 74 constitute an EF-hand domain; it reads VLVSDPWLQS…KSVLDKSYPN (68 aa). Calponin-homology (CH) domains are found at residues 122-239, 267-370, 392-498, and 513-621; these read ESEK…KIQM, LAPE…QHRN, SREE…RYTM, and EITD…YWSL. 2 actin-binding regions span residues 122–370 and 392–621; these read ESEK…QHRN and SREE…YWSL. The tract at residues 628 to 687 is disordered; it reads ESTVSEDATDDGDANSVAGEISNLSIDGASESSPTVQDQELLTKADNDEDEVDGENNKDA. The segment covering 649-667 has biased composition (polar residues); sequence SNLSIDGASESSPTVQDQE.

Interacts with F-actin. As to expression, expressed in mature pollen.

It is found in the cytoplasm. The protein localises to the cytoskeleton. Its function is as follows. Cross-links actin filaments (F-actin) in a calcium independent manner. Induces the formation of actin bundles. Stabilizes and prevents F-actin depolymerization mediated by latrunculin B (LatB). The chain is Fimbrin-5 from Arabidopsis thaliana (Mouse-ear cress).